We begin with the raw amino-acid sequence, 100 residues long: RxLR effector protein PITG_18683 (100 aa).

The N-terminal stretch at 1 to 22 (MRSFLYGILAFAVLARSSAVAA) is a signal peptide. A RxLR-dEER motif is present at residues 43-57 (RSLRVEAQEVIQSGR). Residues 78–82 (KPDIK) carry the Calmodulin-binding motif motif.

It belongs to the RxLR effector family. In terms of assembly, interacts with the host calmodulin.

It localises to the secreted. It is found in the host cell. Functionally, secreted effector that associates with calmodulin to interfere with plant defense-associated calcium signaling in hosts. The chain is RxLR effector protein PITG_18683 from Phytophthora infestans (strain T30-4) (Potato late blight agent).